The chain runs to 259 residues: MKEHKARKRFGQNFLQDTRIIGDIVNAVRPQADDVVIEIGPGLAAITEPLAKKLNRLHVVEIDRDIVCRLKTLPFADKLVIHEGDVLQFDFNGISGKKKIVGNLPYNISTPLLFKLAEVADDVADMHFMLQKEVVERMVAAPKSNDYGRLGVMLQYFFDMELLIDVPPESFDPAPKIDSAVVRMIPVKHRIGKADDFEHFAKLVKLAFRQRRKTIRNNLKELADDDDLQAVGISPQDRAEHIAPEKYVALSNYLADKAV.

Residues Asn-13, Leu-15, Gly-40, Glu-61, Asp-85, and Asn-103 each contribute to the S-adenosyl-L-methionine site.

It belongs to the class I-like SAM-binding methyltransferase superfamily. rRNA adenine N(6)-methyltransferase family. RsmA subfamily.

The protein resides in the cytoplasm. It catalyses the reaction adenosine(1518)/adenosine(1519) in 16S rRNA + 4 S-adenosyl-L-methionine = N(6)-dimethyladenosine(1518)/N(6)-dimethyladenosine(1519) in 16S rRNA + 4 S-adenosyl-L-homocysteine + 4 H(+). In terms of biological role, specifically dimethylates two adjacent adenosines (A1518 and A1519) in the loop of a conserved hairpin near the 3'-end of 16S rRNA in the 30S particle. May play a critical role in biogenesis of 30S subunits. The polypeptide is Ribosomal RNA small subunit methyltransferase A (Neisseria gonorrhoeae (strain NCCP11945)).